A 2403-amino-acid polypeptide reads, in one-letter code: MNDDPPCIVGMACRLPGDVRSPSQLWDLVINQKTGQGPTPPIRYNVDGYYHPDGNRSGGINVPGGYFINEDIRQFDNGFFGINNLEATYMDPQQRKLLEVVFECFESTGASMKSMSGSNTGVYVGNFSVDYQPMQTRDADYLHRYTSTGSGATIMSNRISHVFNLHGPSFTLDTACSSSVYALHQALTAIKVGDCESAVVASANLIMSPELHIGAAKSGVLSPTGTCHTFDASADGYGRAEGVNAIYVKRLSAALRDGNQIRAIVRGSAVNANGRTPGIALPSGNLQEAVMRKAYQNAGLDFAETDYVECHGTGTPVGDPIEVDAVGRCFFRPQGQAPLLIGSVKTNIGHSEAASGLSSVLKVVTAFEKGQIPPTHGLVKLNPKLIPILEQRNLKVVTQADQWPRALRRASVNSFGYGGANAHVILESADSYLSQYFPGRLVTQKRRIENSDQVVVLPVSAASSKSLDIRVQDISQAVSKLFDAENLQGLAYTLTNRRDHLRHKSFLLAKYEGSGKLVEAVEDANNSSDREGLPFGFVFTGQGAQYAGMAKELLAHNRQFRNTIHRLDDVLKALPDPYAPDWTLEQTLLDGPSESRINEVTRSQPICTALQVGLVDLLRSWGVSPTAVVGHSSGEIAAAYAAGLLNSTQAILVAYFRGYSVGKLQSQGTMMAAGVSAQTAKSLIEAKDLQENVRVACVNAPESVTLSGASDGIEALRAEFQDQKKFARKLETGGRAYHSHMMKEIGALYQDLLTPLFAVANSEVPAAARMYSSVGHSTDDLRVLEGHTDWAAYWRQNLEQPVQFSGALASLAEKEGSKLHLIEVGPHSALKGPIQQIRTSIGLDKNSLPYAPSLVRKEDADECLKKLAGTLFVHGHVLDWNKINDLPESGHELVPLHDLAPYPWDYSAPLNWAEPRTSVELRNRKYLRHELLGTFALTGNGIDFTWRNLIRPKEMPWFSDHKLETSVVFPAAGYLAVAIEAVSQVTETRGRLDVAFEFRNVNITAALIVPPDSDPAAKDLELHTTMSLRKLSTVNTSADWHDFAVSSWAAGETTIHCAGSIRVVEPLTESVKHVTTTTVDNDQSFEASPTNRWYQKWDDEGLCFGPYFQSLTSLRTDSERTRSEAIASLRLAPEISSKSYIDSYPVHPITIDACFQAAILGGTAGHLPSLRAWMPVFISECRIQPSSLATSPELEAVIHARSEEVGFSSRRIDATLRDPHGVPVVNLRDARMSLYTGKSSAVQSSSDGKNTNPIDKYMQRQPTLRVHWKPDVARLHPGIERQLQEYVAAFVDQQPLDSDLRDDESIAVIAALVDLAGHKHPRMRVLELGGDDVGYKAKQWLGILNKETAFARCQSWQAGVLDGNGEIVVEGDGEDSSPFDVVVIPRNSSSKQIWSQDPESIASLVSDNGIIVARKSNAAVDVLKALKFNVLPIGQSVILALRPPQWTSLQGRNALIVLGRNPSSTVAEFANTLAAYLRDQAGVALASIVPLDRIDTTDISENDVAISLLETEREFLATISPEDMDRLRAITDVVRDLLWVTGANMLGSVPDPNLTLSNGLSRALMLEQPALRYSVLDIGPVSLLSSTPNAIGTCENALRALAINQEKDDSEFIQRDGILHISRFGPDQDVNSLFRRRLEPLGSLERQTLATAGIARLSVGRPGATDSMFFQQLASTAKTVPEAGYVDIEVKAVGLNAKDVYAIAGRVETRNLTTAIDFSGIITAVGEGVEHLSVGDRVVAWAPNHFTTTERVPAGSVHKLLDHEELTIMSTLITVYGTALYAFNHIAHLRAGESVLIHAGSGGLGFAAITLAQKRGAVVYTTAGSKAKREYLVNELGVPDAHIFNSRDASFVEGILEVTNGRGVDVVLNSLTGDLLHASWACLATFGRFIEVGKRDLVEAGKLDMRVFLRSCTFTAFDLSEFFYAQEPHNRAIWDGLMTQVIELYRAGDIQAPPVKVFGVNEITQAYRTFTQQDRIGKIVISLENPQARIPVVPAAYLSVFDPEKVYLLIGCLGGLGRSLSRWMMSRGARHFVFLGRSGADKPSAQQLVARLQSAGAHVDVVRGDVSRAADVTAAVAASLATGRQIGGVVQAAMGLHEALFTRMPNQAWHTGIDPKWQGTWNLHNALQGHDDALDFFLLTSSVSGTVGTATESNYCAANGFLDAFARWRRSQGKPAVAVGLGMISEVGYLHENPEIEALLLRKGIQPLNEDEFLQVLDLALLSEAAHNPDQAHLLTGLEPAGVRQLKARGFDVSNHGVLTEARAALLAASLAAEQEVLDAQNSTSSSGSNSNTPTTAAPWFKALPGTATSTFASEADAESLNAAILRLIKKRFSNLILMPLEQIDERKALPQFGVDSMIASEFRTWFYTVFKVDIPFLDLMSAQKSLEGLAVVVEGKLVEGWK.

A Ketosynthase family 3 (KS3) domain is found at 3-428 (DDPPCIVGMA…GANAHVILES (426 aa)). Residues Cys-176, His-311, and His-350 each act as for beta-ketoacyl synthase activity in the active site. Positions 538 to 858 (VFTGQGAQYA…PYAPSLVRKE (321 aa)) are malonyl-CoA:ACP transacylase (MAT) domain. Ser-632 functions as the For malonyltransferase activity in the catalytic mechanism. The N-terminal hotdog fold stretch occupies residues 929–1068 (HELLGTFALT…GSIRVVEPLT (140 aa)). The interval 929–1238 (HELLGTFALT…DARMSLYTGK (310 aa)) is dehydratase (DH) domain. Residues 929–1241 (HELLGTFALT…MSLYTGKSSA (313 aa)) form the PKS/mFAS DH domain. His-961 serves as the catalytic Proton acceptor; for dehydratase activity. The segment at 1084–1241 (SFEASPTNRW…MSLYTGKSSA (158 aa)) is C-terminal hotdog fold. Asp-1152 (proton donor; for dehydratase activity) is an active-site residue. The tract at residues 1663–1981 (GATDSMFFQQ…QQDRIGKIVI (319 aa)) is enoyl reductase (ER) domain. The ketoreductase (KR) domain stretch occupies residues 2006–2185 (VYLLIGCLGG…AVAVGLGMIS (180 aa)). Positions 2280-2300 (AQNSTSSSGSNSNTPTTAAPW) are disordered. Positions 2282 to 2296 (NSTSSSGSNSNTPTT) are enriched in low complexity. One can recognise a Carrier domain in the interval 2320–2398 (SLNAAILRLI…GLAVVVEGKL (79 aa)). Ser-2357 carries the O-(pantetheine 4'-phosphoryl)serine modification.

Pantetheine 4'-phosphate serves as cofactor.

Its pathway is secondary metabolite biosynthesis. Highly reducing polyketide synthase; part of the gene cluster that mediates the biosynthesis of flavoglaucin and congeners (including aspergin, dihydroauroglaucin and auroglaucin), prenylated salicylaldehyde derivatives carrying a saturated or an unsaturated C-7 side chain. FogA releases the carboxylic acid (8E,10E,12E)-3,5,7-trihydroxytetradeca-8,10,12-trienoic acid as its product, as well as derivatives with one and two double bonds. FogA is indeed able to reduce the initial triketide, thus being at least partially responsible for the differently saturated heptyl side chains of flavoglaucin congeners. The oxidoreductases fogB, fogC and fogD modify the nascent polyketide in fogA-bound form and, together, fogA, fogB, fogC and fogD are necessary for the formation of the aromatic core and the cyclized PKS products are released as salicyl alcohols. In particular, fogB is responsible for oxidation of a hydroxyl group or reduction of remaining double bond(s) at the C-7 residue whereas fogD is probably involved in the reductive release of the modified PKS products. The cytochrome P450 monooxygenase fogE is then responsible for the hydroxylation at C-3 of the benzene ring. The fogE products are substrates of the prenyltransferase fogH and the prenylated benzyl alcohols are subsequently oxidized by the fogF to produce the final aryl aldehydes flavoglaucin and congeners. The short-chain dehydrogenase fogG does not seem to be involved in the biosynthesis of the prenylated salicylaldehyde derivatives. In Aspergillus ruber (strain CBS 135680), this protein is Highly reducing polyketide synthase fogA.